Consider the following 164-residue polypeptide: MAQMDYTRAAKYFLLFDFFAGFKLGLKYFFKPKATLAYPHEKGPLSPRFRGEHALRRYPNGEERCIACKLCEAICPAQAITIDAEPRDDGSRRTTRYDIDMTKCIYCGFCQEACPVDAIVEGPNFEFATETREELFYDKEKLLDNGERWEAEIARNLELDAPYR.

4Fe-4S ferredoxin-type domains follow at residues 55–85 (LRRY…IDAE) and 95–124 (TRYD…EGPN). The [4Fe-4S] cluster site is built by cysteine 65, cysteine 68, cysteine 71, cysteine 75, cysteine 104, cysteine 107, cysteine 110, and cysteine 114.

This sequence belongs to the complex I 23 kDa subunit family. As to quaternary structure, NDH-1 is composed of 14 different subunits. Subunits NuoA, H, J, K, L, M, N constitute the membrane sector of the complex. [4Fe-4S] cluster is required as a cofactor.

The protein resides in the cell inner membrane. The enzyme catalyses a quinone + NADH + 5 H(+)(in) = a quinol + NAD(+) + 4 H(+)(out). NDH-1 shuttles electrons from NADH, via FMN and iron-sulfur (Fe-S) centers, to quinones in the respiratory chain. The immediate electron acceptor for the enzyme in this species is believed to be ubiquinone. Couples the redox reaction to proton translocation (for every two electrons transferred, four hydrogen ions are translocated across the cytoplasmic membrane), and thus conserves the redox energy in a proton gradient. This is NADH-quinone oxidoreductase subunit I from Dinoroseobacter shibae (strain DSM 16493 / NCIMB 14021 / DFL 12).